An 84-amino-acid polypeptide reads, in one-letter code: Putative protein BCE-1 (84 aa).

The chain is Putative protein BCE-1 (BCE1) from Homo sapiens (Human).